Consider the following 65-residue polypeptide: MYLYQKIKNCLLLTMYQKKNKSHMYDILQSYLYYQKPIPKNLYSHPKKNLYLNIHHYKNINKDLM.

This is an uncharacterized protein from Acheta domesticus (House cricket).